The sequence spans 1188 residues: DNA-directed RNA polymerase subunit beta (1188 aa).

This sequence belongs to the RNA polymerase beta chain family. The RNAP catalytic core consists of 2 alpha, 1 beta, 1 beta' and 1 omega subunit. When a sigma factor is associated with the core the holoenzyme is formed, which can initiate transcription.

The enzyme catalyses RNA(n) + a ribonucleoside 5'-triphosphate = RNA(n+1) + diphosphate. In terms of biological role, DNA-dependent RNA polymerase catalyzes the transcription of DNA into RNA using the four ribonucleoside triphosphates as substrates. This chain is DNA-directed RNA polymerase subunit beta, found in Streptococcus equi subsp. equi (strain 4047).